Consider the following 118-residue polypeptide: Basic phospholipase A2 PA-12A (118 aa).

7 disulfides stabilise this stretch: Cys11–Cys71, Cys27–Cys117, Cys29–Cys45, Cys44–Cys98, Cys51–Cys91, Cys60–Cys84, and Cys78–Cys89. Positions 28, 30, and 32 each coordinate Ca(2+). The active site involves His48. Asp49 lines the Ca(2+) pocket. Asp92 is an active-site residue.

It belongs to the phospholipase A2 family. Group I subfamily. D49 sub-subfamily. It depends on Ca(2+) as a cofactor. As to expression, expressed by the venom gland.

It is found in the secreted. It carries out the reaction a 1,2-diacyl-sn-glycero-3-phosphocholine + H2O = a 1-acyl-sn-glycero-3-phosphocholine + a fatty acid + H(+). Its function is as follows. PLA2 catalyzes the calcium-dependent hydrolysis of the 2-acyl groups in 3-sn-phosphoglycerides. In Pseudechis australis (Mulga snake), this protein is Basic phospholipase A2 PA-12A.